The primary structure comprises 351 residues: Divinyl chlorophyll a/b light-harvesting protein PcbA (351 aa).

6 helical membrane passes run 27 to 47 (FIAAHAAHTGLIAFWAGAFTL), 64 to 84 (LIALPHLATLGIGFDEAGTFV), 89 to 109 (VTAIAIVHLVLSMVYGAGGLL), 202 to 222 (VMGGHAFLAFFMITGGAFHIA), 242 to 262 (AILSWSLAGIGWMAIVAAFWC), and 305 to 325 (LTNVHYFLGFFYIQGHLWHAL).

It belongs to the PsbB/PsbC family. IsiA/Pcb subfamily. As to quaternary structure, the antenna complex consists of divinyl chlorophylls (a and b) and divinyl chlorophyll a/b binding proteins and binds more divinyl chlorophyll b than does the antenna complex from high-light-adapted Prochlorococcus. Divinyl chlorophyll a serves as cofactor. It depends on divinyl chlorophyll b as a cofactor.

It localises to the cellular thylakoid membrane. In terms of biological role, the antenna complex functions as a light receptor, it captures and delivers excitation energy to photosystems II and I. The Prochlorales pcb genes are not related to higher plant LHCs. The chain is Divinyl chlorophyll a/b light-harvesting protein PcbA (pcbA) from Prochlorococcus marinus (strain SARG / CCMP1375 / SS120).